The chain runs to 238 residues: Dolichyldiphosphatase 1 (238 aa).

4 consecutive transmembrane segments (helical) span residues 33-53 (LAYLSLSPVVIIVGFVTLIIF), 100-120 (PSSHSQFMWFFSVYSFLFLYL), 130-150 (FLDLLWRHVLSLGLLTAAFLV), and 162-182 (WSQVLYGGVAGSLMAIAWFAF).

It belongs to the dolichyldiphosphatase family.

Its subcellular location is the endoplasmic reticulum membrane. The enzyme catalyses a di-trans,poly-cis-dolichyl diphosphate + H2O = a di-trans,poly-cis-dolichyl phosphate + phosphate + H(+). It functions in the pathway protein modification; protein glycosylation. Required for efficient N-glycosylation. Necessary for maintaining optimal levels of dolichol-linked oligosaccharides. Hydrolyzes dolichyl pyrophosphate at a very high rate and dolichyl monophosphate at a much lower rate. Does not act on phosphatidate. The chain is Dolichyldiphosphatase 1 (DOLPP1) from Rhinolophus ferrumequinum (Greater horseshoe bat).